The following is a 577-amino-acid chain: Serine/threonine-protein kinase AGC1-5 (577 aa).

A compositionally biased stretch (polar residues) spans 1–12 (MDLASKKNTANV). A disordered region spans residues 1–151 (MDLASKKNTA…DYAYGDNLVG (151 aa)). Basic and acidic residues predominate over residues 44–55 (PHFDPKKMDPLV). Polar residues-rich tracts occupy residues 69–87 (TRGT…SSDG) and 110–120 (LTTSETYSPSA). Positions 185–509 (FRLLKRLGYG…ATEIKQHPFF (325 aa)) constitute a Protein kinase domain. ATP contacts are provided by residues 191-199 (LGYGDIGSV) and Lys214. The Proton acceptor role is filled by Asp310. The AGC-kinase C-terminal domain occupies 510-577 (EGVNWALVRS…DTAYIDFEYF (68 aa)).

Belongs to the protein kinase superfamily. AGC Ser/Thr protein kinase family. Interacts with PDPK1/PDK1. In terms of processing, autophosphorylated and phosphorylated by PDPK1/PDK1. In terms of tissue distribution, specifically expressed in pollen grains.

The enzyme catalyses L-seryl-[protein] + ATP = O-phospho-L-seryl-[protein] + ADP + H(+). It carries out the reaction L-threonyl-[protein] + ATP = O-phospho-L-threonyl-[protein] + ADP + H(+). With respect to regulation, activated by PDPK1/PDK1. Functions redudantly with AGC1-7 as signaling component in the pollen tube. Required for polarized growth of pollen tubes. The protein is Serine/threonine-protein kinase AGC1-5 of Arabidopsis thaliana (Mouse-ear cress).